A 332-amino-acid polypeptide reads, in one-letter code: Casein kinase II subunit alpha (332 aa).

The 285-residue stretch at 43–327 (YEIIRKVGRG…TCQEAMAHPY (285 aa)) folds into the Protein kinase domain. Residues 49–57 (VGRGKYSEV) and Lys-72 each bind ATP. The active-site Proton acceptor is Asp-160.

The protein belongs to the protein kinase superfamily. Ser/Thr protein kinase family. CK2 subfamily. Tetramer composed of two alpha chains, one beta chain and one beta' chain.

The enzyme catalyses L-seryl-[protein] + ATP = O-phospho-L-seryl-[protein] + ADP + H(+). It carries out the reaction L-threonyl-[protein] + ATP = O-phospho-L-threonyl-[protein] + ADP + H(+). Its function is as follows. Catalytic subunit of a constitutively active serine/threonine-protein kinase complex that phosphorylates a large number of substrates containing acidic residues C-terminal to the phosphorylated serine or threonine. This Schizosaccharomyces pombe (strain 972 / ATCC 24843) (Fission yeast) protein is Casein kinase II subunit alpha.